A 509-amino-acid chain; its full sequence is Heat shock 70 kDa protein 14 (509 aa).

This sequence belongs to the heat shock protein 70 family. In terms of assembly, component of ribosome-associated complex (RAC), a heterodimer composed of Hsp70/DnaK-type chaperone HSPA14 and Hsp40/DnaJ-type chaperone DNAJC2.

Its subcellular location is the cytoplasm. The protein localises to the cytosol. In terms of biological role, component of the ribosome-associated complex (RAC), a complex involved in folding or maintaining nascent polypeptides in a folding-competent state. In the RAC complex, binds to the nascent polypeptide chain, while DNAJC2 stimulates its ATPase activity. This chain is Heat shock 70 kDa protein 14 (HSPA14), found in Pongo abelii (Sumatran orangutan).